Here is a 73-residue protein sequence, read N- to C-terminus: Aminopeptidase G (73 aa).

Positions 39-73 (GRRAASSSWPGRGSSRRWRPGRRTGAAARGCWRAP) are disordered. 2 stretches are compositionally biased toward low complexity: residues 42 to 51 (AASSSWPGRG) and 61 to 73 (RTGA…WRAP).

It belongs to the peptidase M1 family. It depends on Zn(2+) as a cofactor.

It is found in the cytoplasm. Its function is as follows. Hydrolyzes preferentially the N-terminal glycine and can also hydrolyze other amino acids which are used by PepN but is unable to hydrolyze basic amino acids. The sequence is that of Aminopeptidase G (pepG) from Streptomyces lividans.